Reading from the N-terminus, the 302-residue chain is MKIVILSRNKSLYSTRRLKEEGEARGHQIDIIDTLHCYMDITSSRPTVRYQGEELPVYDALIPRIGASVTFYGTAVARQFEVMGTFNINESVAISRSRDKLRSMQLLSRKGIGMPRTGFASKPDNIKDLIKNVGGAPVVIKLLEGTQGIGVVLAETAKTAESIIEAFMGIKANILVQEFIKEAGGADIRCLVIGGKVVAAMKRQGAEGEFRSNLHRGGSAVVVKLTKIERETAVNAAKIMGLNFCGVDLLRSESGPKVMEVNSSPGLEGIETATGKNIAGMVFEFLEKNMKAEHSNKTRGRG.

Residues 104-287 (MQLLSRKGIG…IAGMVFEFLE (184 aa)) enclose the ATP-grasp domain. ATP is bound by residues Lys-141, 178 to 179 (EF), Asp-187, and 211 to 213 (RSN). Residues Asp-248, Glu-260, and Asn-262 each contribute to the Mg(2+) site. Mn(2+)-binding residues include Asp-248, Glu-260, and Asn-262.

It belongs to the RimK family. Mg(2+) serves as cofactor. The cofactor is Mn(2+).

The chain is Probable alpha-L-glutamate ligase from Psychromonas ingrahamii (strain DSM 17664 / CCUG 51855 / 37).